Reading from the N-terminus, the 260-residue chain is Thiamine thiazole synthase (260 aa).

NAD(+) contacts are provided by residues Ala36, 55 to 56 (EQ), Gly63, and 154 to 156 (HVD). Fe cation contacts are provided by Asp156 and His171. Met224 is a binding site for NAD(+). Arg234 contacts glycine.

This sequence belongs to the THI4 family. Homooctamer; tetramer of dimers. Fe(2+) serves as cofactor.

The enzyme catalyses hydrogen sulfide + glycine + NAD(+) = ADP-5-ethyl-4-methylthiazole-2-carboxylate + nicotinamide + 3 H2O + H(+). The protein operates within cofactor biosynthesis; thiamine diphosphate biosynthesis. In terms of biological role, involved in the biosynthesis of the thiazole moiety of thiamine. Catalyzes the conversion of NAD and glycine to adenosine diphosphate 5-(2-hydroxyethyl)-4-methylthiazole-2-carboxylate (ADT), an adenylated thiazole intermediate, using free sulfide as a source of sulfur. The sequence is that of Thiamine thiazole synthase from Methanosarcina mazei (strain ATCC BAA-159 / DSM 3647 / Goe1 / Go1 / JCM 11833 / OCM 88) (Methanosarcina frisia).